Reading from the N-terminus, the 256-residue chain is Thiazole synthase (256 aa).

Lys-95 serves as the catalytic Schiff-base intermediate with DXP. Residues Gly-156, Ala-182–Gly-183, and Asn-204–Thr-205 contribute to the 1-deoxy-D-xylulose 5-phosphate site.

It belongs to the ThiG family. In terms of assembly, homotetramer. Forms heterodimers with either ThiH or ThiS.

It is found in the cytoplasm. It catalyses the reaction [ThiS sulfur-carrier protein]-C-terminal-Gly-aminoethanethioate + 2-iminoacetate + 1-deoxy-D-xylulose 5-phosphate = [ThiS sulfur-carrier protein]-C-terminal Gly-Gly + 2-[(2R,5Z)-2-carboxy-4-methylthiazol-5(2H)-ylidene]ethyl phosphate + 2 H2O + H(+). Its pathway is cofactor biosynthesis; thiamine diphosphate biosynthesis. Catalyzes the rearrangement of 1-deoxy-D-xylulose 5-phosphate (DXP) to produce the thiazole phosphate moiety of thiamine. Sulfur is provided by the thiocarboxylate moiety of the carrier protein ThiS. In vitro, sulfur can be provided by H(2)S. The protein is Thiazole synthase of Salmonella arizonae (strain ATCC BAA-731 / CDC346-86 / RSK2980).